A 286-amino-acid chain; its full sequence is Phosphate import ATP-binding protein PstB (286 aa).

One can recognise an ABC transporter domain in the interval 40-281; that stretch reads IAVRNLDFYY…PREQRTQEYI (242 aa). Residue 72-79 participates in ATP binding; it reads GPSGCGKS.

The protein belongs to the ABC transporter superfamily. Phosphate importer (TC 3.A.1.7) family. As to quaternary structure, the complex is composed of two ATP-binding proteins (PstB), two transmembrane proteins (PstC and PstA) and a solute-binding protein (PstS).

Its subcellular location is the cell inner membrane. The catalysed reaction is phosphate(out) + ATP + H2O = ADP + 2 phosphate(in) + H(+). Its function is as follows. Part of the ABC transporter complex PstSACB involved in phosphate import. Responsible for energy coupling to the transport system. This chain is Phosphate import ATP-binding protein PstB, found in Granulibacter bethesdensis (strain ATCC BAA-1260 / CGDNIH1).